The sequence spans 144 residues: Large ribosomal subunit protein uL15 (144 aa).

A disordered region spans residues 1-48; sequence MQLNNLKPAAGSKHAKRRVGRGIGSGLGKTAGRGHKGQKSRSGGFHKV. Over residues 21 to 31 the composition is skewed to gly residues; sequence RGIGSGLGKTA.

The protein belongs to the universal ribosomal protein uL15 family. Part of the 50S ribosomal subunit.

Binds to the 23S rRNA. The polypeptide is Large ribosomal subunit protein uL15 (Cupriavidus pinatubonensis (strain JMP 134 / LMG 1197) (Cupriavidus necator (strain JMP 134))).